The chain runs to 860 residues: Leucine--tRNA ligase (860 aa).

The short motif at 73–83 (VLQPIGWDAFG) is the 'HIGH' region element. Positions 650–654 (SPADM) match the 'KMSKS' region motif. Asp653 lines the ATP pocket.

This sequence belongs to the class-I aminoacyl-tRNA synthetase family.

It is found in the cytoplasm. It catalyses the reaction tRNA(Leu) + L-leucine + ATP = L-leucyl-tRNA(Leu) + AMP + diphosphate. The sequence is that of Leucine--tRNA ligase from Shigella flexneri.